The primary structure comprises 360 residues: Glucan endo-1,3-beta-glucosidase B (360 aa).

Residues 1-25 form the signal peptide; sequence MATSQIAIIVLLGLLVATNIHITEA. At Gln-26 the chain carries Pyrrolidone carboxylic acid. The active-site Proton donor is the Glu-120. Glu-265 functions as the Nucleophile in the catalytic mechanism. Positions 341–360 are cleaved as a propeptide — removed in mature form; it reads VSERVWDITNSTASSLTSEI. Residue Asn-350 is glycosylated (N-linked (GlcNAc...) asparagine).

This sequence belongs to the glycosyl hydrolase 17 family.

Its subcellular location is the vacuole. The enzyme catalyses Hydrolysis of (1-&gt;3)-beta-D-glucosidic linkages in (1-&gt;3)-beta-D-glucans.. In terms of biological role, implicated in the defense of plants against pathogens. The protein is Glucan endo-1,3-beta-glucosidase B of Solanum lycopersicum (Tomato).